The following is a 288-amino-acid chain: Lipoyl synthase (288 aa).

[4Fe-4S] cluster is bound by residues C39, C44, C50, C65, C69, C72, and S276. The 215-residue stretch at 51–265 (WGKGTATFMI…KETGLKKGFE (215 aa)) folds into the Radical SAM core domain.

It belongs to the radical SAM superfamily. Lipoyl synthase family. It depends on [4Fe-4S] cluster as a cofactor.

It localises to the cytoplasm. The enzyme catalyses [[Fe-S] cluster scaffold protein carrying a second [4Fe-4S](2+) cluster] + N(6)-octanoyl-L-lysyl-[protein] + 2 oxidized [2Fe-2S]-[ferredoxin] + 2 S-adenosyl-L-methionine + 4 H(+) = [[Fe-S] cluster scaffold protein] + N(6)-[(R)-dihydrolipoyl]-L-lysyl-[protein] + 4 Fe(3+) + 2 hydrogen sulfide + 2 5'-deoxyadenosine + 2 L-methionine + 2 reduced [2Fe-2S]-[ferredoxin]. The protein operates within protein modification; protein lipoylation via endogenous pathway; protein N(6)-(lipoyl)lysine from octanoyl-[acyl-carrier-protein]: step 2/2. Catalyzes the radical-mediated insertion of two sulfur atoms into the C-6 and C-8 positions of the octanoyl moiety bound to the lipoyl domains of lipoate-dependent enzymes, thereby converting the octanoylated domains into lipoylated derivatives. The chain is Lipoyl synthase from Bacteroides fragilis (strain ATCC 25285 / DSM 2151 / CCUG 4856 / JCM 11019 / LMG 10263 / NCTC 9343 / Onslow / VPI 2553 / EN-2).